The primary structure comprises 445 residues: Glucose-6-phosphate isomerase (445 aa).

The active-site Proton donor is the glutamate 284. Active-site residues include histidine 305 and lysine 419.

It belongs to the GPI family.

It localises to the cytoplasm. It carries out the reaction alpha-D-glucose 6-phosphate = beta-D-fructose 6-phosphate. Its pathway is carbohydrate biosynthesis; gluconeogenesis. It functions in the pathway carbohydrate degradation; glycolysis; D-glyceraldehyde 3-phosphate and glycerone phosphate from D-glucose: step 2/4. Functionally, catalyzes the reversible isomerization of glucose-6-phosphate to fructose-6-phosphate. This Leptospira interrogans serogroup Icterohaemorrhagiae serovar Lai (strain 56601) protein is Glucose-6-phosphate isomerase.